We begin with the raw amino-acid sequence, 119 residues long: Ig heavy chain V region T601 (119 aa).

The 112-residue stretch at 1 to 112 (EVKLLESGGG…GYFDVWGAGT (112 aa)) folds into the Ig-like domain.

This chain is Ig heavy chain V region T601, found in Mus musculus (Mouse).